Consider the following 138-residue polypeptide: Large ribosomal subunit protein uL16c (138 aa).

This sequence belongs to the universal ribosomal protein uL16 family. In terms of assembly, part of the 50S ribosomal subunit.

Its subcellular location is the plastid. It localises to the chloroplast. The sequence is that of Large ribosomal subunit protein uL16c from Emiliania huxleyi (Coccolithophore).